We begin with the raw amino-acid sequence, 47 residues long: Protein YtiD (47 aa).

The protein is Protein YtiD (ytiD) of Escherichia coli (strain K12).